We begin with the raw amino-acid sequence, 279 residues long: Oxygen-dependent coproporphyrinogen-III oxidase (279 aa).

S102 is a binding site for substrate. A divalent metal cation contacts are provided by H106 and H116. Residue H116 is the Proton donor of the active site. 118–120 (NTR) is a binding site for substrate. H149 and H179 together coordinate a divalent metal cation. The important for dimerization stretch occupies residues 244–279 (YVEFNLLYDRGTKFGLMTDGNVEAILMSLPPEVKFN).

Belongs to the aerobic coproporphyrinogen-III oxidase family. As to quaternary structure, homodimer. The cofactor is a divalent metal cation.

It localises to the cytoplasm. The enzyme catalyses coproporphyrinogen III + O2 + 2 H(+) = protoporphyrinogen IX + 2 CO2 + 2 H2O. It functions in the pathway porphyrin-containing compound metabolism; protoporphyrin-IX biosynthesis; protoporphyrinogen-IX from coproporphyrinogen-III (O2 route): step 1/1. Its function is as follows. Involved in the heme biosynthesis. Catalyzes the aerobic oxidative decarboxylation of propionate groups of rings A and B of coproporphyrinogen-III to yield the vinyl groups in protoporphyrinogen-IX. This Rickettsia rickettsii (strain Iowa) protein is Oxygen-dependent coproporphyrinogen-III oxidase.